A 245-amino-acid chain; its full sequence is Derlin-1 (245 aa).

The Cytoplasmic segment spans residues 1–17 (MDAGVWYRSLPRFTRYW). A helical transmembrane segment spans residues 18–38 (LTATVVLSMLCRFDVIPLHWL). At 39-58 (HLDRSAVFSKLQLWRCMTSL) the chain is on the lumenal side. The chain crosses the membrane as a helical span at residues 59-79 (FVFPISSNTAFHFLINCFFIV). Residues 80–99 (QYSSKLEKDQYSRSPADYLY) are Cytoplasmic-facing. Residues 100–120 (LLIVSAVLANIGGMIFNVYFL) traverse the membrane as a helical segment. The Lumenal portion of the chain corresponds to 121–156 (MDTLVLAITYIWCQLNKDVTVSFWFGTRFKAMYLPW). The helical transmembrane segment at 157–177 (VLAAFEFIFHFSLASLVGIFV) threads the bilayer. Over 178–245 (GHVYYFFKFQ…WGRGMTLGRN (68 aa)) the chain is Cytoplasmic. The tract at residues 218–245 (FGLPPESRAPPRQATESPWGRGMTLGRN) is disordered.

The protein belongs to the derlin family.

Its subcellular location is the endoplasmic reticulum membrane. Its function is as follows. May be involved in the degradation process of specific misfolded endoplasmic reticulum (ER) luminal proteins. May also involved in endoplasmic reticulum stress-induced pre-emptive quality control, a mechanism that selectively attenuates the translocation of newly synthesized proteins into the endoplasmic reticulum and reroutes them to the cytosol for proteasomal degradation. In Drosophila melanogaster (Fruit fly), this protein is Derlin-1.